Reading from the N-terminus, the 554-residue chain is CTP synthase (554 aa).

The segment at 1-265 (MTPLIFVTGG…DELVIDQFKL (265 aa)) is amidoligase domain. S13 provides a ligand contact to CTP. S13 contacts UTP. Residues 14 to 19 (SLGKGI) and D71 contribute to the ATP site. D71 and E139 together coordinate Mg(2+). CTP-binding positions include 146–148 (DIE), 186–191 (KTKPTQ), and K222. UTP is bound by residues 186–191 (KTKPTQ) and K222. The Glutamine amidotransferase type-1 domain occupies 292-545 (NIAVVGKYVD…VRAAREKKAG (254 aa)). Position 353 (G353) interacts with L-glutamine. C380 functions as the Nucleophile; for glutamine hydrolysis in the catalytic mechanism. L-glutamine is bound by residues 381-384 (YGMQ), E404, and R471. Residues H518 and E520 contribute to the active site.

The protein belongs to the CTP synthase family. In terms of assembly, homotetramer.

It catalyses the reaction UTP + L-glutamine + ATP + H2O = CTP + L-glutamate + ADP + phosphate + 2 H(+). It carries out the reaction L-glutamine + H2O = L-glutamate + NH4(+). The catalysed reaction is UTP + NH4(+) + ATP = CTP + ADP + phosphate + 2 H(+). Its pathway is pyrimidine metabolism; CTP biosynthesis via de novo pathway; CTP from UDP: step 2/2. With respect to regulation, allosterically activated by GTP, when glutamine is the substrate; GTP has no effect on the reaction when ammonia is the substrate. The allosteric effector GTP functions by stabilizing the protein conformation that binds the tetrahedral intermediate(s) formed during glutamine hydrolysis. Inhibited by the product CTP, via allosteric rather than competitive inhibition. Its function is as follows. Catalyzes the ATP-dependent amination of UTP to CTP with either L-glutamine or ammonia as the source of nitrogen. Regulates intracellular CTP levels through interactions with the four ribonucleotide triphosphates. The sequence is that of CTP synthase from Xanthomonas axonopodis pv. citri (strain 306).